The sequence spans 426 residues: Glutamate-1-semialdehyde 2,1-aminomutase (426 aa).

Position 266 is an N6-(pyridoxal phosphate)lysine (lysine 266).

The protein belongs to the class-III pyridoxal-phosphate-dependent aminotransferase family. HemL subfamily. Requires pyridoxal 5'-phosphate as cofactor.

Its subcellular location is the cytoplasm. It catalyses the reaction (S)-4-amino-5-oxopentanoate = 5-aminolevulinate. The protein operates within porphyrin-containing compound metabolism; protoporphyrin-IX biosynthesis; 5-aminolevulinate from L-glutamyl-tRNA(Glu): step 2/2. The chain is Glutamate-1-semialdehyde 2,1-aminomutase (hemL) from Methanocaldococcus jannaschii (strain ATCC 43067 / DSM 2661 / JAL-1 / JCM 10045 / NBRC 100440) (Methanococcus jannaschii).